The chain runs to 228 residues: MTKRYFVTGTDTEVGKTVASCALLQAATQLGYQTVGYKPVASGSEMTTDGLRNSDALALQRNSSLPQPYSAINPYTFAEPTSPHIVSADEGRAIDAAVLSRGLRTLEAQADWVLTEGAGGWFTPLSATLTFADWVQTEQLPVILVVGVKLGCINHAMLTALAVEQAGLPLVGWIANDIQPPGARHGEYLATLRRVIPAPLLGEIPWLGVSPSQAATGQYLDLSPLERA.

13–18 lines the ATP pocket; sequence EVGKTV. A Mg(2+)-binding site is contributed by Thr17. Lys38 is an active-site residue. Substrate is bound at residue Ser42. ATP is bound by residues Asp55, 116–119, 176–177, and 205–207; these read EGAG, ND, and PWL. Residues Asp55 and Glu116 each contribute to the Mg(2+) site.

This sequence belongs to the dethiobiotin synthetase family. In terms of assembly, homodimer. Requires Mg(2+) as cofactor.

Its subcellular location is the cytoplasm. It catalyses the reaction (7R,8S)-7,8-diammoniononanoate + CO2 + ATP = (4R,5S)-dethiobiotin + ADP + phosphate + 3 H(+). It participates in cofactor biosynthesis; biotin biosynthesis; biotin from 7,8-diaminononanoate: step 1/2. Functionally, catalyzes a mechanistically unusual reaction, the ATP-dependent insertion of CO2 between the N7 and N8 nitrogen atoms of 7,8-diaminopelargonic acid (DAPA, also called 7,8-diammoniononanoate) to form a ureido ring. This is ATP-dependent dethiobiotin synthetase BioD 1 from Salmonella typhimurium (strain LT2 / SGSC1412 / ATCC 700720).